Here is a 92-residue protein sequence, read N- to C-terminus: Sugar fermentation stimulation protein B (92 aa).

Residues 50–69 constitute a DNA-binding region (H-T-H motif); sequence EMIIAKALGTDPWVIWPSRY.

This sequence belongs to the ner transcriptional regulatory family.

This protein is involved in positive regulation of the metabolism of sugars. The protein is Sugar fermentation stimulation protein B (sfsB) of Escherichia coli O157:H7.